The primary structure comprises 510 residues: Bifunctional purine biosynthesis protein PurH (510 aa).

In terms of domain architecture, MGS-like spans 1 to 145 (MSKRALISVS…KNFEDVLVVT (145 aa)).

It belongs to the PurH family.

It carries out the reaction (6R)-10-formyltetrahydrofolate + 5-amino-1-(5-phospho-beta-D-ribosyl)imidazole-4-carboxamide = 5-formamido-1-(5-phospho-D-ribosyl)imidazole-4-carboxamide + (6S)-5,6,7,8-tetrahydrofolate. It catalyses the reaction IMP + H2O = 5-formamido-1-(5-phospho-D-ribosyl)imidazole-4-carboxamide. The protein operates within purine metabolism; IMP biosynthesis via de novo pathway; 5-formamido-1-(5-phospho-D-ribosyl)imidazole-4-carboxamide from 5-amino-1-(5-phospho-D-ribosyl)imidazole-4-carboxamide (10-formyl THF route): step 1/1. Its pathway is purine metabolism; IMP biosynthesis via de novo pathway; IMP from 5-formamido-1-(5-phospho-D-ribosyl)imidazole-4-carboxamide: step 1/1. The sequence is that of Bifunctional purine biosynthesis protein PurH from Oceanobacillus iheyensis (strain DSM 14371 / CIP 107618 / JCM 11309 / KCTC 3954 / HTE831).